Consider the following 175-residue polypeptide: Crossover junction endodeoxyribonuclease RuvC (175 aa).

Residues aspartate 16, glutamate 76, and aspartate 148 contribute to the active site. Residues aspartate 16, glutamate 76, and aspartate 148 each contribute to the Mg(2+) site.

Belongs to the RuvC family. As to quaternary structure, homodimer which binds Holliday junction (HJ) DNA. The HJ becomes 2-fold symmetrical on binding to RuvC with unstacked arms; it has a different conformation from HJ DNA in complex with RuvA. In the full resolvosome a probable DNA-RuvA(4)-RuvB(12)-RuvC(2) complex forms which resolves the HJ. Requires Mg(2+) as cofactor.

It is found in the cytoplasm. The enzyme catalyses Endonucleolytic cleavage at a junction such as a reciprocal single-stranded crossover between two homologous DNA duplexes (Holliday junction).. Its function is as follows. The RuvA-RuvB-RuvC complex processes Holliday junction (HJ) DNA during genetic recombination and DNA repair. Endonuclease that resolves HJ intermediates. Cleaves cruciform DNA by making single-stranded nicks across the HJ at symmetrical positions within the homologous arms, yielding a 5'-phosphate and a 3'-hydroxyl group; requires a central core of homology in the junction. The consensus cleavage sequence is 5'-(A/T)TT(C/G)-3'. Cleavage occurs on the 3'-side of the TT dinucleotide at the point of strand exchange. HJ branch migration catalyzed by RuvA-RuvB allows RuvC to scan DNA until it finds its consensus sequence, where it cleaves and resolves the cruciform DNA. The protein is Crossover junction endodeoxyribonuclease RuvC of Rhodopseudomonas palustris (strain BisB18).